The sequence spans 376 residues: Chaperone protein DnaJ (376 aa).

The J domain occupies 5–70 (DYYEVLGVKK…QKRAAYDQYG (66 aa)). The CR-type zinc finger occupies 131-209 (GVTKEIRIPT…CHGHGRVEKS (79 aa)). Zn(2+) is bound by residues Cys-144, Cys-147, Cys-161, Cys-164, Cys-183, Cys-186, Cys-197, and Cys-200. CXXCXGXG motif repeat units lie at residues 144 to 151 (CDVCHGSG), 161 to 168 (CSTCRGAG), 183 to 190 (CPTCHGSG), and 197 to 204 (CNKCHGHG).

Belongs to the DnaJ family. As to quaternary structure, homodimer. It depends on Zn(2+) as a cofactor.

It is found in the cytoplasm. Its function is as follows. Participates actively in the response to hyperosmotic and heat shock by preventing the aggregation of stress-denatured proteins and by disaggregating proteins, also in an autonomous, DnaK-independent fashion. Unfolded proteins bind initially to DnaJ; upon interaction with the DnaJ-bound protein, DnaK hydrolyzes its bound ATP, resulting in the formation of a stable complex. GrpE releases ADP from DnaK; ATP binding to DnaK triggers the release of the substrate protein, thus completing the reaction cycle. Several rounds of ATP-dependent interactions between DnaJ, DnaK and GrpE are required for fully efficient folding. Also involved, together with DnaK and GrpE, in the DNA replication of plasmids through activation of initiation proteins. This Yersinia enterocolitica serotype O:8 / biotype 1B (strain NCTC 13174 / 8081) protein is Chaperone protein DnaJ.